A 206-amino-acid chain; its full sequence is uncharacterized protein (206 aa).

Residues Lys128 to Arg206 are disordered. The segment covering Tyr171 to Ile181 has biased composition (polar residues).

The protein resides in the cytoplasm. Its subcellular location is the nucleus. This is an uncharacterized protein from Schizosaccharomyces pombe (strain 972 / ATCC 24843) (Fission yeast).